Reading from the N-terminus, the 85-residue chain is Putative defensin-like protein 258 (85 aa).

Positions 1–25 (MINVSLKRSLLIFISVITSNIGSEA) are cleaved as a signal peptide. 3 disulfides stabilise this stretch: Cys-57-Cys-75, Cys-63-Cys-82, and Cys-67-Cys-84.

The protein belongs to the DEFL family.

Its subcellular location is the secreted. The polypeptide is Putative defensin-like protein 258 (Arabidopsis thaliana (Mouse-ear cress)).